The chain runs to 962 residues: Activity-dependent neuroprotective protein 2a (962 aa).

The C2H2-type 1 zinc-finger motif lies at 75 to 98; the sequence is LCCSLCWYSSRSVPTFRSHIHRCH. A C2H2-type 2; degenerate zinc finger spans residues 108–130; it reads LMCPYCPFVSSPKVTEQHIQFFH. The segment at 165-188 adopts a C2H2-type 3; degenerate zinc-finger fold; it reads YTCATCGYHDSLLYVMKKHVLVNH. The C2H2-type 4 zinc finger occupies 219-244; it reads YHCKLCKLPAETIEHLLYHILSSEKH. A C2H2-type 5; degenerate zinc finger spans residues 527–547; the sequence is VKCLRCKILLTEQGIFQHLLH. C2H2-type zinc fingers lie at residues 549 to 572 and 650 to 673; these read LKCLFCPQMFYSFKQIMEHSKKEH and NACPFCQVKLQNPEDYELHLQTKH. Residues 688–712 form a C2H2-type 8; degenerate zinc finger; it reads YKCIYCFGVYTEKSTPKTISIHVQR. The tract at residues 753 to 781 is disordered; that stretch reads QGAPEFPKPKKEAVTPRNRRRNTKASKTG. Positions 795–854 form a DNA-binding region, homeobox; it reads PMGMERTSFEDRKDFLSQYFHRKPYVTKTEIELLASRLWINKADVKAHFNSKLTKCLKAI.

It is found in the nucleus. May be involved in transcriptional regulation. Required for progression through late erythroid differentiation. May be involved in vasculogenesis. This is Activity-dependent neuroprotective protein 2a from Danio rerio (Zebrafish).